The primary structure comprises 582 residues: BTB/POZ domain and ankyrin repeat-containing protein NPR1 (582 aa).

Over residues 1–18 (MEPPTSHVTNAFSDSDSA) the composition is skewed to polar residues. Positions 1 to 25 (MEPPTSHVTNAFSDSDSASVEEGGA) are disordered. The 86-residue stretch at 55–140 (ADARIAVPGG…VLDYLYSGRV (86 aa)) folds into the BTB domain. The segment at 147–161 (ACLCVDEDCAHVGCH) adopts a C2HC NPR-type zinc-finger fold. Zn(2+) is bound by residues cysteine 150, cysteine 155, histidine 157, and cysteine 160. ANK repeat units lie at residues 229–258 (RSNL…SLGL), 269–299 (KHVR…NLDD), 301–328 (FALH…DVNH), and 332–361 (RGYT…RPAD). The interval 391-526 (PSPKDRLCIE…VLDKIMDDET (136 aa)) is salicylic acid-binding core (SBC). Arginine 436 is a binding site for salicylate. The segment at 551–582 (QKAFHEDKEENDRSGLSSSSSSTSIGAIRPRR) is disordered. The segment covering 553-563 (AFHEDKEENDR) has biased composition (basic and acidic residues). Residues 564–574 (SGLSSSSSSTS) show a composition bias toward low complexity.

Belongs to the plant 'ANKYRIN-BTB/POZ' family. 'NPR1-like' subfamily. As to quaternary structure, oligomer in an uninduced state; disulfide-linked. Forms activated monomer upon changes in cellular redox potential. Interacts with TGA2.1, TGA2.2, TGA2.3, LG2, TGAL1 and TGAL4. Interacts with NRR, RH1, RH2 and RH3.

Its subcellular location is the cytoplasm. The protein localises to the nucleus. It localises to the nuclear body. It participates in protein modification; protein ubiquitination. Its function is as follows. Salicylic acid (SA)-binding substrate-specific adapter of an E3 ubiquitin-protein ligase complex (CUL3-RBX1-BTB) which mediates the ubiquitination and subsequent proteasomal degradation of target proteins. Transcription cofactor that represses gene expression in the absence of salicylic acid (SA), when attached to negative cis-elements (W-box) with WRKY transcription factors, but stimulates gene expression upon activation by SA, when sumoylated and attached to positive cis-elements (as-1) with TGA transcription factors, thus confering immunity through a series of gene regulations ending in a significant increase in antimicrobial and defense genes expression. Key positive factor of disease resistance. Plays an essential role in benzothiadiazole (BTH)-induced resistance to the blast fungus disease caused by Magnaporthe oryzae. Involved in defense response against the bacterial blight disease caused by Xanthomonas oryzae pv. oryzae (Xoo). Over-expression of NPR1/NH1 confers disease resistance to Xoo, but also enhances herbivore susceptibility. Functions as a transcriptional coactivator of TGA2.1 and LG2 in vitro. Involved in defense response against herbivore. Plants silencing NPR1/NH1 have increased herbivore-induced trypsin proteinase inhibitors and volatiles, which reduces the performance of the striped stem borer (SSB) Chilo suppressalis. This is BTB/POZ domain and ankyrin repeat-containing protein NPR1 from Oryza sativa subsp. japonica (Rice).